A 375-amino-acid polypeptide reads, in one-letter code: Alcohol dehydrogenase 1 (375 aa).

Residue serine 2 is modified to N-acetylserine. Cysteine 47, histidine 68, cysteine 98, cysteine 101, cysteine 104, cysteine 112, and cysteine 175 together coordinate Zn(2+). NAD(+)-binding positions include 200 to 205 (GLGGVG), aspartate 224, lysine 229, 293 to 295 (LGV), and arginine 370.

Belongs to the zinc-containing alcohol dehydrogenase family. Class-I subfamily. Homodimer. Zn(2+) serves as cofactor.

The protein localises to the cytoplasm. It carries out the reaction a primary alcohol + NAD(+) = an aldehyde + NADH + H(+). It catalyses the reaction a secondary alcohol + NAD(+) = a ketone + NADH + H(+). The protein is Alcohol dehydrogenase 1 (ADH1) of Apteryx australis (Southern brown kiwi).